The following is a 55-amino-acid chain: Large ribosomal subunit protein bL33 (55 aa).

This sequence belongs to the bacterial ribosomal protein bL33 family.

The protein is Large ribosomal subunit protein bL33 of Rhodopseudomonas palustris (strain BisB18).